Here is a 157-residue protein sequence, read N- to C-terminus: 2-C-methyl-D-erythritol 2,4-cyclodiphosphate synthase (157 aa).

A divalent metal cation contacts are provided by aspartate 8 and histidine 10. 4-CDP-2-C-methyl-D-erythritol 2-phosphate is bound by residues 8–10 (DVH) and 34–35 (HS). Histidine 42 is an a divalent metal cation binding site. 4-CDP-2-C-methyl-D-erythritol 2-phosphate contacts are provided by residues 56–58 (DIG), 61–65 (FPDTD), 100–106 (AQAPKMA), 132–135 (TTTE), phenylalanine 139, and arginine 142.

It belongs to the IspF family. Homotrimer. The cofactor is a divalent metal cation.

The enzyme catalyses 4-CDP-2-C-methyl-D-erythritol 2-phosphate = 2-C-methyl-D-erythritol 2,4-cyclic diphosphate + CMP. Its pathway is isoprenoid biosynthesis; isopentenyl diphosphate biosynthesis via DXP pathway; isopentenyl diphosphate from 1-deoxy-D-xylulose 5-phosphate: step 4/6. Its function is as follows. Involved in the biosynthesis of isopentenyl diphosphate (IPP) and dimethylallyl diphosphate (DMAPP), two major building blocks of isoprenoid compounds. Catalyzes the conversion of 4-diphosphocytidyl-2-C-methyl-D-erythritol 2-phosphate (CDP-ME2P) to 2-C-methyl-D-erythritol 2,4-cyclodiphosphate (ME-CPP) with a corresponding release of cytidine 5-monophosphate (CMP). The protein is 2-C-methyl-D-erythritol 2,4-cyclodiphosphate synthase of Pseudomonas paraeruginosa (strain DSM 24068 / PA7) (Pseudomonas aeruginosa (strain PA7)).